A 203-amino-acid chain; its full sequence is Dephospho-CoA kinase (203 aa).

The DPCK domain maps to 4–203 (VIGITGGIAT…EEGYIQSESE (200 aa)). An ATP-binding site is contributed by 12–17 (ATGKST).

It belongs to the CoaE family.

It is found in the cytoplasm. The enzyme catalyses 3'-dephospho-CoA + ATP = ADP + CoA + H(+). It participates in cofactor biosynthesis; coenzyme A biosynthesis; CoA from (R)-pantothenate: step 5/5. Functionally, catalyzes the phosphorylation of the 3'-hydroxyl group of dephosphocoenzyme A to form coenzyme A. This chain is Dephospho-CoA kinase, found in Staphylococcus epidermidis (strain ATCC 12228 / FDA PCI 1200).